A 765-amino-acid polypeptide reads, in one-letter code: Protein O-mannosyl-transferase 2 (765 aa).

The disordered stretch occupies residues 1–31; it reads MAASVVKTPKCPRRGSVKDVAQNAPRTAPTS. Residues 35–55 form a helical membrane-spanning segment; it reads ANWNWWLLLATVFLVTFATRF. N80, N106, and N119 each carry an N-linked (GlcNAc...) asparagine glycan. 5 consecutive transmembrane segments (helical) span residues 128-148, 175-195, 206-226, 228-248, and 268-288; these read YFCT…VYDL, ILLD…MVKV, GLRW…TISV, FVGL…LWLI, and ITLI…HLSV. N290 and N314 each carry an N-linked (GlcNAc...) asparagine glycan. MIR domains are found at residues 318 to 374, 384 to 440, and 445 to 501; these read PRDV…IRPH, VQIL…VLIV, and NETV…VEDN. N445 carries N-linked (GlcNAc...) asparagine glycosylation. A run of 4 helical transmembrane segments spans residues 566 to 586, 667 to 687, 689 to 709, and 719 to 739; these read IYLL…ALFV, LFLG…VLYF, HYFP…NYIL, and VILG…SPLA. Residue N751 is glycosylated (N-linked (GlcNAc...) asparagine).

The protein belongs to the glycosyltransferase 39 family. As to quaternary structure, interacts with Rt/POMT1. At the cellular blastoderm stage, expression accumulates in the ventrally located mesoderm primordium. At germ band extension, mesoderm expression is seen as stripes of strong expression. A very strong signal is also detected in the invaginating gut. As the germ band retracts, mesodermal expression decays and becomes restricted to somatic muscle precursors.

The protein localises to the endoplasmic reticulum membrane. The catalysed reaction is a di-trans,poly-cis-dolichyl beta-D-mannosyl phosphate + L-seryl-[protein] = 3-O-(alpha-D-mannosyl)-L-seryl-[protein] + a di-trans,poly-cis-dolichyl phosphate + H(+). It catalyses the reaction a di-trans,poly-cis-dolichyl beta-D-mannosyl phosphate + L-threonyl-[protein] = 3-O-(alpha-D-mannosyl)-L-threonyl-[protein] + a di-trans,poly-cis-dolichyl phosphate + H(+). It functions in the pathway protein modification; protein glycosylation. In terms of biological role, rt/POMT1 and tw/POMT2 function as a protein O-mannosyltransferase in association with each other to generate and maintain normal muscle development. This Drosophila melanogaster (Fruit fly) protein is Protein O-mannosyl-transferase 2 (tw).